We begin with the raw amino-acid sequence, 136 residues long: Ubiquinol-cytochrome c reductase complex assembly factor 4 (136 aa).

A signal peptide spans 1-15 (MNSVLCSRAAGAVRA). Residues 16–80 (LRLVGWASRS…GKPQQRPWWK (65 aa)) lie on the Mitochondrial matrix side of the membrane. Residues 26–58 (LHPPPRGRSPAQPADREEEDDDPNLPIQFSGSK) are disordered. A helical transmembrane segment spans residues 81-97 (VLPLTLTLVALVVWCYQ). At 98-136 (REESGMDLWLRQVLEEEDEEEPEGPPEELEAPALYGART) the chain is on the mitochondrial intermembrane side. The span at 112–127 (EEEDEEEPEGPPEELE) shows a compositional bias: acidic residues. The disordered stretch occupies residues 112 to 136 (EEEDEEEPEGPPEELEAPALYGART).

Belongs to the UQCC4 family. In terms of assembly, forms a complex, named COMB/coordinator of mitochondrial CYTB biogenesis, composed of UQCC1, UQCC2, UQCC4, UQCC5 and UQCC6; stabilizes nascent cytochrome b/MT-CYB and promotes its membrane insertion. Forms a complex, named COMA, composed of UQCC1, UQCC2 and UQCC4; activates MT-CYB translation. Forms a complex, named COMC, composed of UQCC1, UQCC2; UQCC3 and UQCC4; mediates MT-CYB hemylation and association with the first nuclear-encoded complex III subunit UQCRQ. Complexes COMA and COMB are bound to the mitochondrion inner membrane by UQCC4.

The protein resides in the mitochondrion inner membrane. Its function is as follows. Required for the assembly and stability of the mitochondrial ubiquinol-cytochrome c reductase complex (complex III (CIII) or cytochrome b-c1 complex), a multisubunit transmembrane complex that is part of the mitochondrial electron transport chain (ETC) which drives oxidative phosphorylation. The polypeptide is Ubiquinol-cytochrome c reductase complex assembly factor 4 (Uqcc4) (Mus musculus (Mouse)).